A 130-amino-acid chain; its full sequence is Calcium-binding protein KRP1 (130 aa).

An EF-hand domain is found at Leu72–Asp107. 4 residues coordinate Ca(2+): Asp85, Asp87, Asp89, and Glu96.

Functionally, potential calcium sensor that binds calcium in vitro. The protein is Calcium-binding protein KRP1 of Arabidopsis thaliana (Mouse-ear cress).